We begin with the raw amino-acid sequence, 470 residues long: Sorting nexin-17 (470 aa).

A PX domain is found at 1-109 (MHFSIPETES…SFLRRAQQET (109 aa)). A 1,2-diacyl-sn-glycero-3-phospho-(1D-myo-inositol-3-phosphate) contacts are provided by R36, S38, K62, and R75. In terms of domain architecture, Ras-associating spans 115 to 206 (EEVSLEVLLS…YKIVLRKSYW (92 aa)). The tract at residues 115 to 432 (EEVSLEVLLS…DASRESMVKL (318 aa)) is FERM-like. The segment at 270–432 (GYLRFDACVA…DASRESMVKL (163 aa)) is PTB-like F3 module. S336, S407, S409, S415, S421, S437, and S440 each carry phosphoserine. The segment at 400-426 (VGGTLRRSDSQQAVKSPPLLESPDASR) is disordered.

This sequence belongs to the sorting nexin family. In terms of assembly, monomer. Interacts with APP (via cytoplasmic YXNPXY motif). Interacts with KIF1B. Interacts with the C-termini of P-selectin, PTC, LDLR, VLDLR, LRP1 and LRP8. Interacts with KRIT1 (via N-terminus). Interacts with HRAS. Interacts with ITGB1 and ITGB5 (via NPxY motif). Interacts with CCDC22 and CCDC93; the interaction associates SNX17 with the CCC complex. Interacts (via C-terminus) with VPS26C and VPS35L; the interactions are direct and associate SNX17 with the retriever complex.

The protein resides in the cytoplasm. It is found in the early endosome. It localises to the cytoplasmic vesicle membrane. Critical regulator of endosomal recycling of numerous surface proteins, including integrins, signaling receptor and channels. Binds to NPxY sequences in the cytoplasmic tails of target cargos. Associates with retriever and CCC complexes to prevent lysosomal degradation and promote cell surface recycling of numerous cargos such as integrins ITGB1, ITGB5 and their associated alpha subunits. Also required for maintenance of normal cell surface levels of APP and LRP1. Interacts with membranes containing phosphatidylinositol 3-phosphate (PtdIns(3P)). In Bos taurus (Bovine), this protein is Sorting nexin-17 (SNX17).